The chain runs to 762 residues: MHKPLRWLITIAFYVSNVILIGYSLSSNGSISEFYLHSVVLIECFSLLGVVTSDCLTPSLSYISSNIFHISDRVSGMTLLALGNALPDITSTYQSMKSGVTSLAIGELFGGIFFLLTVVIGLMGCVATIQFQHDKSIETYTEESFDQNLSYDRSNYILDVGIFTFMLLVSGTFLADGRLYFWECIVMVLTYCCCAVYLIKSYKYPCEINDALEREVEIKKTVLANNHITVPNRFTLTTTSDITSTDDGIRYVRPLGDTQIDEDNAISLDPTRLPSKSLDNISRFNQGIPERRDLIRRRIRGYLRSHYHGWVRMTLQDLLNIWEKQNLFNNTVKSLSLPSDDTHLFTKASLDEEGRPLIRKRMNSLQPKDFYKYLSLRNGENSNALDTAISAPQNEYQTYYNEPTSLFLTVPQKKTSKKSLSCDRIPNLVRSNNIILNDEATRTQESTNALNSISDVIDNSLLQYERDDIILDRTLSLCSTKSRTAWHSFQLYNYLTDVSLEIGFFEFLSLLVTTPVSIILYLSIPSEISQTDHDLPLSYLQNIQLIASPIILNQLITNNFSFWLLILSLVIAILLYFKTRTIPNKFNSDIIFTVAFLLSLACLSKAVHIIVVTLTHWINVFNISETILGLTIFTWGNSIGDLVSNITFVKIGVLEIAIGACFGSPLLYFLFGVGFDGIMIMLGDKTGKIVSGRDSNILMHHIDFKVDKNLINTGVGILIAFLIFTVLIPLNDWKIDKKISIALLTLYIVVTCISVFLEVHQV.

An N-terminal signal peptide occupies residues 1–26 (MHKPLRWLITIAFYVSNVILIGYSLS). Residues 27-30 (SNGS) lie on the Extracellular side of the membrane. Residue Asn28 is glycosylated (N-linked (GlcNAc...) asparagine). A helical membrane pass occupies residues 31–51 (ISEFYLHSVVLIECFSLLGVV). Over 52 to 102 (TSDCLTPSLSYISSNIFHISDRVSGMTLLALGNALPDITSTYQSMKSGVTS) the chain is Cytoplasmic. A helical transmembrane segment spans residues 103–123 (LAIGELFGGIFFLLTVVIGLM). The Extracellular segment spans residues 124-156 (GCVATIQFQHDKSIETYTEESFDQNLSYDRSNY). Asn148 is a glycosylation site (N-linked (GlcNAc...) asparagine). Residues 157-177 (ILDVGIFTFMLLVSGTFLADG) form a helical membrane-spanning segment. A topological domain (cytoplasmic) is located at residue Arg178. The chain crosses the membrane as a helical span at residues 179-199 (LYFWECIVMVLTYCCCAVYLI). Over 200–501 (KSYKYPCEIN…YNYLTDVSLE (302 aa)) the chain is Extracellular. Residues Asn280 and Asn329 are each glycosylated (N-linked (GlcNAc...) asparagine). A helical membrane pass occupies residues 502 to 522 (IGFFEFLSLLVTTPVSIILYL). Residues 523–554 (SIPSEISQTDHDLPLSYLQNIQLIASPIILNQ) are Cytoplasmic-facing. The helical transmembrane segment at 555–575 (LITNNFSFWLLILSLVIAILL) threads the bilayer. Residues 576 to 589 (YFKTRTIPNKFNSD) lie on the Extracellular side of the membrane. Residues 590-610 (IIFTVAFLLSLACLSKAVHII) traverse the membrane as a helical segment. At 611–615 (VVTLT) the chain is on the cytoplasmic side. Residues 616-636 (HWINVFNISETILGLTIFTWG) traverse the membrane as a helical segment. The Extracellular portion of the chain corresponds to 637 to 650 (NSIGDLVSNITFVK). N-linked (GlcNAc...) asparagine glycosylation is present at Asn645. Residues 651 to 671 (IGVLEIAIGACFGSPLLYFLF) form a helical membrane-spanning segment. At 672–709 (GVGFDGIMIMLGDKTGKIVSGRDSNILMHHIDFKVDKN) the chain is on the cytoplasmic side. The chain crosses the membrane as a helical span at residues 710-730 (LINTGVGILIAFLIFTVLIPL). The Extracellular portion of the chain corresponds to 731 to 738 (NDWKIDKK). The helical transmembrane segment at 739-759 (ISIALLTLYIVVTCISVFLEV) threads the bilayer. The Cytoplasmic portion of the chain corresponds to 760–762 (HQV).

This sequence belongs to the Ca(2+):cation antiporter (CaCA) (TC 2.A.19) family.

The protein resides in the membrane. Its function is as follows. Putative cation exchanger. In Saccharomyces cerevisiae (strain ATCC 204508 / S288c) (Baker's yeast), this protein is Putative cation exchanger YDL206W.